The primary structure comprises 306 residues: tRNA pseudouridine synthase B (306 aa).

Catalysis depends on aspartate 48, which acts as the Nucleophile.

The protein belongs to the pseudouridine synthase TruB family. Type 1 subfamily.

It carries out the reaction uridine(55) in tRNA = pseudouridine(55) in tRNA. Responsible for synthesis of pseudouridine from uracil-55 in the psi GC loop of transfer RNAs. The sequence is that of tRNA pseudouridine synthase B from Haemophilus influenzae (strain 86-028NP).